Here is a 261-residue protein sequence, read N- to C-terminus: MTHQTHAYHMVNPSPWPLTGALSALLMTSGLIMWFHFNSVALLTLGLTTNMLTMYQWWRDVIRESTFQGHHTPNVQKGLRYGMILFIISEVLFFTGFFWAFYHSSLAPTPELGGCWPPTGIHPLNPLEVPLLNTSVLLASGVSITWAHHSLMEGNRNHMLQALFITIALGVYFTLLQASEYYEAPFTISDGVYGSTFFVATGFHGLHVIIGSTFLIVCFFRQLKFHFTSSHHFGFEAAAWYWHFVDVVWLFLYVSIYWWGS.

At M1–P15 the chain is on the mitochondrial matrix side. The chain crosses the membrane as a helical span at residues W16 to W34. Over F35–V40 the chain is Mitochondrial intermembrane. The helical transmembrane segment at A41 to T66 threads the bilayer. Topologically, residues F67–T72 are mitochondrial matrix. A helical membrane pass occupies residues P73–S105. Over L106–E128 the chain is Mitochondrial intermembrane. Residues V129 to M152 traverse the membrane as a helical segment. Topologically, residues E153–N155 are mitochondrial matrix. Residues R156–E183 form a helical membrane-spanning segment. The Mitochondrial intermembrane segment spans residues A184–D190. A helical transmembrane segment spans residues G191–L223. The Mitochondrial matrix portion of the chain corresponds to K224–H232. Residues F233–I256 form a helical membrane-spanning segment. The Mitochondrial intermembrane segment spans residues Y257 to S261.

Belongs to the cytochrome c oxidase subunit 3 family. Component of the cytochrome c oxidase (complex IV, CIV), a multisubunit enzyme composed of 14 subunits. The complex is composed of a catalytic core of 3 subunits MT-CO1, MT-CO2 and MT-CO3, encoded in the mitochondrial DNA, and 11 supernumerary subunits COX4I, COX5A, COX5B, COX6A, COX6B, COX6C, COX7A, COX7B, COX7C, COX8 and NDUFA4, which are encoded in the nuclear genome. The complex exists as a monomer or a dimer and forms supercomplexes (SCs) in the inner mitochondrial membrane with NADH-ubiquinone oxidoreductase (complex I, CI) and ubiquinol-cytochrome c oxidoreductase (cytochrome b-c1 complex, complex III, CIII), resulting in different assemblies (supercomplex SCI(1)III(2)IV(1) and megacomplex MCI(2)III(2)IV(2)).

It localises to the mitochondrion inner membrane. It carries out the reaction 4 Fe(II)-[cytochrome c] + O2 + 8 H(+)(in) = 4 Fe(III)-[cytochrome c] + 2 H2O + 4 H(+)(out). Its function is as follows. Component of the cytochrome c oxidase, the last enzyme in the mitochondrial electron transport chain which drives oxidative phosphorylation. The respiratory chain contains 3 multisubunit complexes succinate dehydrogenase (complex II, CII), ubiquinol-cytochrome c oxidoreductase (cytochrome b-c1 complex, complex III, CIII) and cytochrome c oxidase (complex IV, CIV), that cooperate to transfer electrons derived from NADH and succinate to molecular oxygen, creating an electrochemical gradient over the inner membrane that drives transmembrane transport and the ATP synthase. Cytochrome c oxidase is the component of the respiratory chain that catalyzes the reduction of oxygen to water. Electrons originating from reduced cytochrome c in the intermembrane space (IMS) are transferred via the dinuclear copper A center (CU(A)) of subunit 2 and heme A of subunit 1 to the active site in subunit 1, a binuclear center (BNC) formed by heme A3 and copper B (CU(B)). The BNC reduces molecular oxygen to 2 water molecules using 4 electrons from cytochrome c in the IMS and 4 protons from the mitochondrial matrix. This chain is Cytochrome c oxidase subunit 3 (MT-CO3), found in Nanger dama (Dama gazelle).